Reading from the N-terminus, the 478-residue chain is ATP synthase subunit beta (478 aa).

An ATP-binding site is contributed by 164 to 171; that stretch reads GGAGVGKT.

This sequence belongs to the ATPase alpha/beta chains family. F-type ATPases have 2 components, CF(1) - the catalytic core - and CF(0) - the membrane proton channel. CF(1) has five subunits: alpha(3), beta(3), gamma(1), delta(1), epsilon(1). CF(0) has three main subunits: a(1), b(2) and c(9-12). The alpha and beta chains form an alternating ring which encloses part of the gamma chain. CF(1) is attached to CF(0) by a central stalk formed by the gamma and epsilon chains, while a peripheral stalk is formed by the delta and b chains.

The protein localises to the cell membrane. It carries out the reaction ATP + H2O + 4 H(+)(in) = ADP + phosphate + 5 H(+)(out). Its function is as follows. Produces ATP from ADP in the presence of a proton gradient across the membrane. The catalytic sites are hosted primarily by the beta subunits. The protein is ATP synthase subunit beta of Corynebacterium kroppenstedtii (strain DSM 44385 / JCM 11950 / CIP 105744 / CCUG 35717).